Consider the following 181-residue polypeptide: Major urinary protein 11 (181 aa).

The first 19 residues, 1 to 19, serve as a signal peptide directing secretion; sequence MKMLLLLLCLGLTLVCVHA. Cys-83 and Cys-176 are disulfide-bonded.

This sequence belongs to the calycin superfamily. Lipocalin family.

Its subcellular location is the secreted. In terms of biological role, major urinary proteins (Mups) bind pheromones, and thus stabilize them to allow slow release into the air from urine marks. May protect pheromones from oxidation. May also act as pheromones themselves. In this context, they play a role in the regulation of social behaviors, such as aggression, mating, pup-suckling, territory establishment and dominance. Binds the pheromone analog 2-sec-butyl-4,5-dihydrothiazole (SBT) in vitro. This chain is Major urinary protein 11, found in Mus musculus (Mouse).